Here is a 309-residue protein sequence, read N- to C-terminus: Elongation factor Ts (309 aa).

The segment at 82–85 is involved in Mg(2+) ion dislocation from EF-Tu; it reads TDFV.

This sequence belongs to the EF-Ts family.

It localises to the cytoplasm. In terms of biological role, associates with the EF-Tu.GDP complex and induces the exchange of GDP to GTP. It remains bound to the aminoacyl-tRNA.EF-Tu.GTP complex up to the GTP hydrolysis stage on the ribosome. This chain is Elongation factor Ts, found in Rickettsia akari (strain Hartford).